Here is a 200-residue protein sequence, read N- to C-terminus: GTP-binding protein rho2 (200 aa).

15-22 (GDGACGKT) is a binding site for GTP. The Effector region motif lies at 37 to 45 (YVPTVFENY). Residues 62–66 (DTAGQ) and 120–123 (MKAD) each bind GTP. Residue C197 is modified to Cysteine methyl ester. Residue C197 is the site of S-geranylgeranyl cysteine attachment. The propeptide at 198-200 (IIS) is removed in mature form.

This sequence belongs to the small GTPase superfamily. Rho family. In terms of assembly, interacts with pck2.

Its subcellular location is the cell membrane. In terms of biological role, involved in cell morphogenesis, the maintenance of growth direction, control of polarity and of cell wall integrity. Regulates the synthesis of alpha-D-glucan through activation of pck2. The polypeptide is GTP-binding protein rho2 (rho2) (Schizosaccharomyces pombe (strain 972 / ATCC 24843) (Fission yeast)).